We begin with the raw amino-acid sequence, 437 residues long: Enolase (437 aa).

Gln162 is a (2R)-2-phosphoglycerate binding site. Catalysis depends on Glu204, which acts as the Proton donor. Positions 251, 297, and 324 each coordinate Mg(2+). Residues Lys349, Arg378, Ser379, and Lys400 each contribute to the (2R)-2-phosphoglycerate site. The Proton acceptor role is filled by Lys349.

Belongs to the enolase family. It depends on Mg(2+) as a cofactor.

Its subcellular location is the cytoplasm. The protein resides in the secreted. It localises to the cell surface. The catalysed reaction is (2R)-2-phosphoglycerate = phosphoenolpyruvate + H2O. Its pathway is carbohydrate degradation; glycolysis; pyruvate from D-glyceraldehyde 3-phosphate: step 4/5. Its function is as follows. Catalyzes the reversible conversion of 2-phosphoglycerate (2-PG) into phosphoenolpyruvate (PEP). It is essential for the degradation of carbohydrates via glycolysis. This Chlorobium limicola (strain DSM 245 / NBRC 103803 / 6330) protein is Enolase.